We begin with the raw amino-acid sequence, 270 residues long: Interleukin-1 alpha (270 aa).

A propeptide spanning residues 1-112 (MAKVPDLFED…EVEEEIMKPR (112 aa)) is cleaved from the precursor. Lysine 82 is modified (N6-acetyllysine). The nuclear localization signal (NLS) stretch occupies residues 82-86 (KKRRL). Phosphoserine is present on serine 87. A glycan (N-linked (GlcNAc...) asparagine) is linked at asparagine 139.

It belongs to the IL-1 family. In terms of assembly, monomer. Interacts with TMED10; the interaction mediates the translocation from the cytoplasm into the ERGIC (endoplasmic reticulum-Golgi intermediate compartment) and thereby secretion. Interacts with IL1R1. Interacts with S100A13; this interaction is the first step in the export of IL1A, followed by direct translocation of this complex across the plasma membrane. In terms of processing, acetylated within its nuclear localization sequence, which impacts subcellular localization. Post-translationally, proteolytic processed by CAPN1 in a calcium-dependent manner. Cleavage from 31 kDa precursor to 18 kDa biologically active molecules. Phosphorylated. Phosphorylation greatly enhances susceptibility to digestion and promotes the conversion of pre-IL1A alpha to the biologically active IL1A.

The protein resides in the nucleus. The protein localises to the cytoplasm. Its subcellular location is the secreted. Functionally, cytokine constitutively present intracellularly in nearly all resting non-hematopoietic cells that plays an important role in inflammation and bridges the innate and adaptive immune systems. After binding to its receptor IL1R1 together with its accessory protein IL1RAP, forms the high affinity interleukin-1 receptor complex. Signaling involves the recruitment of adapter molecules such as MYD88, IRAK1 or IRAK4. In turn, mediates the activation of NF-kappa-B and the three MAPK pathways p38, p42/p44 and JNK pathways. Within the cell, acts as an alarmin and cell death results in its liberation in the extracellular space after disruption of the cell membrane to induce inflammation and alert the host to injury or damage. In addition to its role as a danger signal, which occurs when the cytokine is passively released by cell necrosis, directly senses DNA damage and acts as signal for genotoxic stress without loss of cell integrity. This chain is Interleukin-1 alpha (IL1A), found in Felis catus (Cat).